We begin with the raw amino-acid sequence, 229 residues long: Putative N-acetylmannosamine-6-phosphate 2-epimerase (229 aa).

This sequence belongs to the NanE family.

It catalyses the reaction an N-acyl-D-glucosamine 6-phosphate = an N-acyl-D-mannosamine 6-phosphate. The protein operates within amino-sugar metabolism; N-acetylneuraminate degradation; D-fructose 6-phosphate from N-acetylneuraminate: step 3/5. Functionally, converts N-acetylmannosamine-6-phosphate (ManNAc-6-P) to N-acetylglucosamine-6-phosphate (GlcNAc-6-P). The sequence is that of Putative N-acetylmannosamine-6-phosphate 2-epimerase from Actinobacillus pleuropneumoniae serotype 3 (strain JL03).